We begin with the raw amino-acid sequence, 37 residues long: uncharacterized protein (37 aa).

This is an uncharacterized protein from Bacillus caldotenax.